The sequence spans 344 residues: N-acetyl-gamma-glutamyl-phosphate reductase (344 aa).

Cys150 is a catalytic residue.

Belongs to the NAGSA dehydrogenase family. Type 1 subfamily.

Its subcellular location is the cytoplasm. It catalyses the reaction N-acetyl-L-glutamate 5-semialdehyde + phosphate + NADP(+) = N-acetyl-L-glutamyl 5-phosphate + NADPH + H(+). It functions in the pathway amino-acid biosynthesis; L-arginine biosynthesis; N(2)-acetyl-L-ornithine from L-glutamate: step 3/4. Functionally, catalyzes the NADPH-dependent reduction of N-acetyl-5-glutamyl phosphate to yield N-acetyl-L-glutamate 5-semialdehyde. The chain is N-acetyl-gamma-glutamyl-phosphate reductase from Pseudomonas fluorescens (strain Pf0-1).